The sequence spans 77 residues: Translational regulator CsrA (77 aa).

This sequence belongs to the CsrA/RsmA family. As to quaternary structure, homodimer; the beta-strands of each monomer intercalate to form a hydrophobic core, while the alpha-helices form wings that extend away from the core.

It is found in the cytoplasm. Functionally, a translational regulator that binds mRNA to regulate translation initiation and/or mRNA stability. Usually binds in the 5'-UTR at or near the Shine-Dalgarno sequence preventing ribosome-binding, thus repressing translation. Its main target seems to be the major flagellin gene, while its function is anatagonized by FliW. The sequence is that of Translational regulator CsrA from Desulfitobacterium hafniense (strain DSM 10664 / DCB-2).